A 599-amino-acid polypeptide reads, in one-letter code: UvrABC system protein C (599 aa).

In terms of domain architecture, GIY-YIG spans 15 to 93 (EKPGCYQYFD…IKEYQPRYNV (79 aa)). The region spanning 207–242 (HRLVRMYRDRMQVYSEGLRFEEAQICKERIELLERY) is the UVR domain.

The protein belongs to the UvrC family. Interacts with UvrB in an incision complex.

It localises to the cytoplasm. In terms of biological role, the UvrABC repair system catalyzes the recognition and processing of DNA lesions. UvrC both incises the 5' and 3' sides of the lesion. The N-terminal half is responsible for the 3' incision and the C-terminal half is responsible for the 5' incision. The protein is UvrABC system protein C of Porphyromonas gingivalis (strain ATCC BAA-308 / W83).